Reading from the N-terminus, the 236-residue chain is Dolichol-phosphate mannosyltransferase (236 aa).

Residues proline 9, tyrosine 11, glutamate 13, isoleucine 40, aspartate 42, aspartate 95, alanine 96, aspartate 97, arginine 124, valine 160, arginine 211, and lysine 217 each coordinate GDP-alpha-D-mannose. Aspartate 97 lines the Mg(2+) pocket. Aspartate 97 contributes to the Mn(2+) binding site.

The protein belongs to the glycosyltransferase 2 family. In terms of assembly, component of the dolichol-phosphate mannose (DPM) synthase complex composed of dpm1, dpm2 and dpm3. The cofactor is Mg(2+). It depends on Mn(2+) as a cofactor. Ca(2+) serves as cofactor.

The protein localises to the endoplasmic reticulum. It carries out the reaction a di-trans,poly-cis-dolichyl phosphate + GDP-alpha-D-mannose = a di-trans,poly-cis-dolichyl beta-D-mannosyl phosphate + GDP. The protein operates within protein modification; protein glycosylation. Functionally, transfers mannose from GDP-mannose to dolichol monophosphate to form dolichol phosphate mannose (Dol-P-Man) which is the mannosyl donor in pathways leading to N-glycosylation, glycosyl phosphatidylinositol membrane anchoring, and O-mannosylation of proteins. The sequence is that of Dolichol-phosphate mannosyltransferase from Schizosaccharomyces pombe (strain 972 / ATCC 24843) (Fission yeast).